Here is a 23-residue protein sequence, read N- to C-terminus: Keratin (23 aa).

The region spanning 1–23 (YSSQLAQVQGLIGNVESQLAEIR) is the IF rod domain. The tract at residues 1–23 (YSSQLAQVQGLIGNVESQLAEIR) is coil 2.

This sequence belongs to the intermediate filament family.

The polypeptide is Keratin (Cervus elaphus (Red deer)).